We begin with the raw amino-acid sequence, 77 residues long: uncharacterized protein (77 aa).

Residues 11-65 (FARLRREKGLTQEEVEARSGFSQQYLSSLERGRRNPTVITLYELAQALGVSHVEL) form the HTH cro/C1-type domain. Positions 22–41 (QEEVEARSGFSQQYLSSLER) form a DNA-binding region, H-T-H motif.

This is an uncharacterized protein from Sinorhizobium fredii (strain NBRC 101917 / NGR234).